The following is a 447-amino-acid chain: Serine/threonine-protein phosphatase 2A 55 kDa regulatory subunit B gamma isoform (447 aa).

WD repeat units lie at residues 22–61 (TEADVISTVEFNHTGELLATGDKGGRVVIFQREPESKNAP), 87–128 (EIEE…KRPE), 171–209 (GHTYHINSISVNSDCETYMSADDLRINLWHLAITDRSFN), 220–260 (DLTE…LCDK), 279–317 (EIISSVSDVKFSHSGRYMLTRDYLTVKVWDLNMEARPIE), 334–375 (ESDC…DVTL), and 410–446 (DFTKKILHTAWHPAENIIAIAATNNLYIFQDKVNSDM).

Belongs to the phosphatase 2A regulatory subunit B family. PP2A consists of a common heterodimeric core enzyme, composed of a 36 kDa catalytic subunit (subunit C) and a 65 kDa constant regulatory subunit (PR65 or subunit A), that associates with a variety of regulatory subunits. Proteins that associate with the core dimer include three families of regulatory subunits B (the R2/B/PR55/B55, R3/B''/PR72/PR130/PR59 and R5/B'/B56 families), the 48 kDa variable regulatory subunit, viral proteins, and cell signaling molecules. Interacts with IER5.

The B regulatory subunit might modulate substrate selectivity and catalytic activity, and might also direct the localization of the catalytic enzyme to a particular subcellular compartment. This chain is Serine/threonine-protein phosphatase 2A 55 kDa regulatory subunit B gamma isoform (Ppp2r2c), found in Mus musculus (Mouse).